The primary structure comprises 531 residues: GTPase Obg (531 aa).

Positions 2 to 159 constitute an Obg domain; it reads ASFVDRVIVH…QEVELELKSI (158 aa). The 182-residue stretch at 160–341 folds into the OBG-type G domain; that stretch reads ADIALVGFPS…LSFAMAALVS (182 aa). GTP contacts are provided by residues 166-173, 191-195, 212-215, 293-296, and 322-324; these read GFPSAGKS, FTTLV, DVPG, NKVD, and STA. Residues Ser-173 and Thr-193 each contribute to the Mg(2+) site. A disordered region spans residues 346–365; it reads QEEQREQQRQTVPVLQPEPV. An OCT domain is found at 368-453; the sequence is RRGRDRREFV…ENGVVFDWEP (86 aa). The tract at residues 459–531 is disordered; it reads AELLGGPRGS…TSETKETNEK (73 aa). Basic and acidic residues-rich tracts occupy residues 468–507 and 514–531; these read SDLR…ERRA and VDAR…TNEK.

This sequence belongs to the TRAFAC class OBG-HflX-like GTPase superfamily. OBG GTPase family. Monomer. Mg(2+) serves as cofactor.

The protein resides in the cytoplasm. In terms of biological role, an essential GTPase which binds GTP, GDP and possibly (p)ppGpp with moderate affinity, with high nucleotide exchange rates and a fairly low GTP hydrolysis rate. Plays a role in control of the cell cycle, stress response, ribosome biogenesis and in those bacteria that undergo differentiation, in morphogenesis control. This Kocuria rhizophila (strain ATCC 9341 / DSM 348 / NBRC 103217 / DC2201) protein is GTPase Obg.